The primary structure comprises 680 residues: Heterokaryon incompatibility protein 6, OR allele (680 aa).

Involved in the non-self-recognition during asexual growth of N.crassa. This process involves restriction of heterokaryon formation via genetic differences at 11 het loci, including mating type. This chain is Heterokaryon incompatibility protein 6, OR allele (het-6), found in Neurospora crassa (strain ATCC 24698 / 74-OR23-1A / CBS 708.71 / DSM 1257 / FGSC 987).